The chain runs to 154 residues: Protein phosphatase 1 regulatory subunit 27 (154 aa).

ANK repeat units follow at residues 63 to 92 (SGLA…DIHQ) and 96 to 125 (TGWT…DRDA).

In terms of assembly, interacts with DYSF and PPP1CA.

In terms of biological role, inhibits phosphatase activity of protein phosphatase 1 (PP1) complexes. This is Protein phosphatase 1 regulatory subunit 27 (Ppp1r27) from Mus musculus (Mouse).